Reading from the N-terminus, the 313-residue chain is Protein FixB (313 aa).

Residue 255–283 (LYLAVGISGQIQHMVGANASQTIFAINKD) coordinates FAD.

This sequence belongs to the ETF alpha-subunit/FixB family. As to quaternary structure, heterodimer of FixA and FixB.

It participates in amine and polyamine metabolism; carnitine metabolism. Its function is as follows. Required for anaerobic carnitine reduction. May bring reductant to CaiA. The protein is Protein FixB of Escherichia coli O7:K1 (strain IAI39 / ExPEC).